Here is a 430-residue protein sequence, read N- to C-terminus: Histidine--tRNA ligase (430 aa).

The protein belongs to the class-II aminoacyl-tRNA synthetase family. In terms of assembly, homodimer.

Its subcellular location is the cytoplasm. It catalyses the reaction tRNA(His) + L-histidine + ATP = L-histidyl-tRNA(His) + AMP + diphosphate + H(+). In Chlorobium limicola (strain DSM 245 / NBRC 103803 / 6330), this protein is Histidine--tRNA ligase.